Consider the following 698-residue polypeptide: Elongation factor G (698 aa).

The tr-type G domain occupies Asp10–Leu285. GTP-binding positions include Ala19–Thr26, Asp83–His87, and Asn137–Asp140.

The protein belongs to the TRAFAC class translation factor GTPase superfamily. Classic translation factor GTPase family. EF-G/EF-2 subfamily.

Its subcellular location is the cytoplasm. Functionally, catalyzes the GTP-dependent ribosomal translocation step during translation elongation. During this step, the ribosome changes from the pre-translocational (PRE) to the post-translocational (POST) state as the newly formed A-site-bound peptidyl-tRNA and P-site-bound deacylated tRNA move to the P and E sites, respectively. Catalyzes the coordinated movement of the two tRNA molecules, the mRNA and conformational changes in the ribosome. This Lactiplantibacillus plantarum (strain ATCC BAA-793 / NCIMB 8826 / WCFS1) (Lactobacillus plantarum) protein is Elongation factor G.